The primary structure comprises 248 residues: Ubiquinone/menaquinone biosynthesis C-methyltransferase UbiE (248 aa).

The S-adenosyl-L-methionine site is built by Ser68 and Asp92.

The protein belongs to the class I-like SAM-binding methyltransferase superfamily. MenG/UbiE family.

It catalyses the reaction a 2-demethylmenaquinol + S-adenosyl-L-methionine = a menaquinol + S-adenosyl-L-homocysteine + H(+). It carries out the reaction a 2-methoxy-6-(all-trans-polyprenyl)benzene-1,4-diol + S-adenosyl-L-methionine = a 5-methoxy-2-methyl-3-(all-trans-polyprenyl)benzene-1,4-diol + S-adenosyl-L-homocysteine + H(+). The protein operates within quinol/quinone metabolism; menaquinone biosynthesis; menaquinol from 1,4-dihydroxy-2-naphthoate: step 2/2. Its pathway is cofactor biosynthesis; ubiquinone biosynthesis. Functionally, methyltransferase required for the conversion of demethylmenaquinol (DMKH2) to menaquinol (MKH2) and the conversion of 2-polyprenyl-6-methoxy-1,4-benzoquinol (DDMQH2) to 2-polyprenyl-3-methyl-6-methoxy-1,4-benzoquinol (DMQH2). This Rickettsia massiliae (strain Mtu5) protein is Ubiquinone/menaquinone biosynthesis C-methyltransferase UbiE.